Reading from the N-terminus, the 220-residue chain is Protein-L-isoaspartate O-methyltransferase (220 aa).

Residue Ser-64 is part of the active site.

Belongs to the methyltransferase superfamily. L-isoaspartyl/D-aspartyl protein methyltransferase family.

The protein resides in the cytoplasm. It carries out the reaction [protein]-L-isoaspartate + S-adenosyl-L-methionine = [protein]-L-isoaspartate alpha-methyl ester + S-adenosyl-L-homocysteine. Its function is as follows. Catalyzes the methyl esterification of L-isoaspartyl residues in peptides and proteins that result from spontaneous decomposition of normal L-aspartyl and L-asparaginyl residues. It plays a role in the repair and/or degradation of damaged proteins. The sequence is that of Protein-L-isoaspartate O-methyltransferase from Thermococcus onnurineus (strain NA1).